The following is a 473-amino-acid chain: TOX high mobility group box family member 2 (473 aa).

Disordered stretches follow at residues 1-42 (MSDG…SLLH), 139-211 (GLRS…VSAY), 277-302 (SKSP…PPKQ), and 340-473 (LLPG…PSAR). Positions 8-20 (LLSTSQTYNSQGE) are enriched in polar residues. A required for transcriptional activation region spans residues 25-63 (YEIPPITPPNLPEPSLLHLGDHEAGYHSLCHGLAPNGLL). The segment covering 153–164 (GSKSATPSPSSS) has biased composition (low complexity). The span at 171–188 (DAHFKISGEKRPSTDPGK) shows a compositional bias: basic and acidic residues. Positions 172–201 (AHFKISGEKRPSTDPGKKAKNPKKKKKKDP) match the Nuclear localization signal motif. The span at 189–199 (KAKNPKKKKKK) shows a compositional bias: basic residues. Positions 204–272 (PQKPVSAYAL…EYLKALAAYR (69 aa)) form a DNA-binding region, HMG box. Composition is skewed to low complexity over residues 373-382 (LLSPPLSMSP) and 415-440 (SDFP…WDGS). Polar residues predominate over residues 463 to 473 (SPKNLQEPSAR).

As to expression, highly expressed in ovary, where it is restricted to undifferentiated granulosa cells. Expressed in hypothalamus, pituitary gland, testis and uterus.

Its subcellular location is the nucleus. Putative transcriptional activator involved in the hypothalamo-pituitary-gonadal system. In Rattus norvegicus (Rat), this protein is TOX high mobility group box family member 2 (Tox2).